The sequence spans 203 residues: LexA repressor (203 aa).

A DNA-binding region (H-T-H motif) is located at residues 29–49; the sequence is VREIGQEVGLSSSSTVHGYLK. Active-site for autocatalytic cleavage activity residues include Ser-126 and Lys-163.

This sequence belongs to the peptidase S24 family. As to quaternary structure, homodimer.

It carries out the reaction Hydrolysis of Ala-|-Gly bond in repressor LexA.. In terms of biological role, represses a number of genes involved in the response to DNA damage (SOS response), including recA and lexA. In the presence of single-stranded DNA, RecA interacts with LexA causing an autocatalytic cleavage which disrupts the DNA-binding part of LexA, leading to derepression of the SOS regulon and eventually DNA repair. The chain is LexA repressor from Pelotomaculum thermopropionicum (strain DSM 13744 / JCM 10971 / SI).